Consider the following 261-residue polypeptide: Cytochrome c oxidase subunit 3 (261 aa).

The Mitochondrial matrix portion of the chain corresponds to 1 to 15 (MTHQTHAYHMVNPSP). Residues 16–34 (WPLTGALSALLMTSGLIMW) form a helical membrane-spanning segment. Residues 35–40 (FHFNST) are Mitochondrial intermembrane-facing. Residues 41-66 (TLLMLGLTTNMLTMYQWWRDVVREST) traverse the membrane as a helical segment. Topologically, residues 67–72 (FQGHHT) are mitochondrial matrix. Residues 73-105 (PNVQKGLRYGMILFIISEVLFFTGFFWAFYHSS) traverse the membrane as a helical segment. The Mitochondrial intermembrane portion of the chain corresponds to 106–128 (LAPTPELGGCWPPTGIHPLNPLE). The chain crosses the membrane as a helical span at residues 129 to 152 (VPLLNTSVLLASGVSITWAHHSLM). Residues 153–155 (EGN) are Mitochondrial matrix-facing. Residues 156–183 (RNHMLQALFITIALGVYFTLLQASEYYE) traverse the membrane as a helical segment. The Mitochondrial intermembrane portion of the chain corresponds to 184–190 (APFTISD). The chain crosses the membrane as a helical span at residues 191–223 (GVYGSTFFVATGFHGLHVIIGSTFLIVCFFRQL). The Mitochondrial matrix portion of the chain corresponds to 224–232 (KFHFTSSHH). Residues 233–256 (FGFEAAAWYWHFVDVVWLFLYVSI) form a helical membrane-spanning segment. Topologically, residues 257–261 (YWWGS) are mitochondrial intermembrane.

Belongs to the cytochrome c oxidase subunit 3 family. Component of the cytochrome c oxidase (complex IV, CIV), a multisubunit enzyme composed of 14 subunits. The complex is composed of a catalytic core of 3 subunits MT-CO1, MT-CO2 and MT-CO3, encoded in the mitochondrial DNA, and 11 supernumerary subunits COX4I, COX5A, COX5B, COX6A, COX6B, COX6C, COX7A, COX7B, COX7C, COX8 and NDUFA4, which are encoded in the nuclear genome. The complex exists as a monomer or a dimer and forms supercomplexes (SCs) in the inner mitochondrial membrane with NADH-ubiquinone oxidoreductase (complex I, CI) and ubiquinol-cytochrome c oxidoreductase (cytochrome b-c1 complex, complex III, CIII), resulting in different assemblies (supercomplex SCI(1)III(2)IV(1) and megacomplex MCI(2)III(2)IV(2)).

Its subcellular location is the mitochondrion inner membrane. It carries out the reaction 4 Fe(II)-[cytochrome c] + O2 + 8 H(+)(in) = 4 Fe(III)-[cytochrome c] + 2 H2O + 4 H(+)(out). Component of the cytochrome c oxidase, the last enzyme in the mitochondrial electron transport chain which drives oxidative phosphorylation. The respiratory chain contains 3 multisubunit complexes succinate dehydrogenase (complex II, CII), ubiquinol-cytochrome c oxidoreductase (cytochrome b-c1 complex, complex III, CIII) and cytochrome c oxidase (complex IV, CIV), that cooperate to transfer electrons derived from NADH and succinate to molecular oxygen, creating an electrochemical gradient over the inner membrane that drives transmembrane transport and the ATP synthase. Cytochrome c oxidase is the component of the respiratory chain that catalyzes the reduction of oxygen to water. Electrons originating from reduced cytochrome c in the intermembrane space (IMS) are transferred via the dinuclear copper A center (CU(A)) of subunit 2 and heme A of subunit 1 to the active site in subunit 1, a binuclear center (BNC) formed by heme A3 and copper B (CU(B)). The BNC reduces molecular oxygen to 2 water molecules using 4 electrons from cytochrome c in the IMS and 4 protons from the mitochondrial matrix. The polypeptide is Cytochrome c oxidase subunit 3 (MT-CO3) (Gazella spekei (Speke's gazelle)).